A 166-amino-acid chain; its full sequence is V-type proton ATPase subunit c4 (166 aa).

Residues 1 to 13 (MASSGFSGDETAP) are Lumenal-facing. Residues 14-34 (FFGFLGAAAALVFSCMGAAYG) traverse the membrane as a helical segment. The Cytoplasmic segment spans residues 35–56 (TAKSGVGVASMGVMRPELVMKS). The chain crosses the membrane as a helical span at residues 57–77 (IVPVVMAGVLGIYGLIIAVII). The Lumenal portion of the chain corresponds to 78–96 (STGINPKAKSYYLFDGYAH). Residues 97–118 (LSSGLACGLAGLSAGMAIGIVG) traverse the membrane as a helical segment. At 119 to 130 (DAGVRANAQQPK) the chain is on the cytoplasmic side. The chain crosses the membrane as a helical span at residues 131–156 (LFVGMILILIFAEALALYGLIVGIIL). Residues 157–166 (SSRAGQSRAE) lie on the Lumenal side of the membrane.

It belongs to the V-ATPase proteolipid subunit family. In terms of assembly, V-ATPase is a heteromultimeric enzyme composed of a peripheral catalytic V1 complex (components A to H) attached to an integral membrane V0 proton pore complex (components: a, c, c'', d and e). The proteolipid components c and c'' are present as a hexameric ring that forms the proton-conducting pore. Interacts with APD2.

It is found in the vacuole membrane. In terms of biological role, proton-conducting pore forming subunit of the membrane integral V0 complex of vacuolar ATPase. V-ATPase is responsible for acidifying a variety of intracellular compartments in eukaryotic cells. In Arabidopsis thaliana (Mouse-ear cress), this protein is V-type proton ATPase subunit c4 (VHA-c4).